Here is a 235-residue protein sequence, read N- to C-terminus: Small ribosomal subunit protein uS2 (235 aa).

It belongs to the universal ribosomal protein uS2 family.

The chain is Small ribosomal subunit protein uS2 from Anoxybacillus flavithermus (strain DSM 21510 / WK1).